The sequence spans 445 residues: Histone acetyltransferase of the MYST family 2 (445 aa).

A compositionally biased stretch (polar residues) spans 1 to 23 (MGSSANTETNGNAPPPSSNQKPP). The tract at residues 1-58 (MGSSANTETNGNAPPPSSNQKPPATNGVDGSHPPPPPLTPDQAIIESDPSKKRKMGML) is disordered. Positions 60–118 (LEVGTRVMCRWRDGKHHPVKVIERRRIHNGGQNDYEYYVHYTEFNRRLDEWTQLDQLDL) constitute a Tudor-knot domain. The 272-residue stretch at 169–440 (TKVKNISTIE…VDASKLIWTP (272 aa)) folds into the MYST-type HAT domain. The C2HC MYST-type zinc finger occupies 202–227 (LFFCEFCLNFMKRKEQLQRHMRKCDL). The residue at position 269 (Lys-269) is an N6-acetyllysine; by autocatalysis. Acetyl-CoA contacts are provided by residues 312 to 314 (ILT) and 319 to 325 (QRKGYGK). Catalysis depends on Glu-345, which acts as the Proton donor/acceptor. Residue Ser-349 participates in acetyl-CoA binding.

The protein belongs to the MYST (SAS/MOZ) family. As to quaternary structure, interacts with MRG1 and MRG2. In terms of processing, autoacetylation at Lys-269 is required for proper function. As to expression, expressed in cotyledons, leaves, stems, roots and, at higher levels in developing flowers, particularly in the anthers and gynoecia. Constitutively expressed in all tissues, predominantly in shoot apical meristem.

The protein localises to the nucleus. The catalysed reaction is L-lysyl-[protein] + acetyl-CoA = N(6)-acetyl-L-lysyl-[protein] + CoA + H(+). Its function is as follows. Histone acetyltransferase which may be involved in transcriptional activation. Acetylates 'Lys-5' of histone H4 (H4K5ac). Essential for gametophyte development. Negative regulator of flowering controlling the H4K5ac levels in the FLC chromatin. This is Histone acetyltransferase of the MYST family 2 from Arabidopsis thaliana (Mouse-ear cress).